The following is a 95-amino-acid chain: DNA-directed RNA polymerase subunit Rpo11 (95 aa).

It belongs to the archaeal Rpo11/eukaryotic RPB11/RPC19 RNA polymerase subunit family. In terms of assembly, part of the RNA polymerase complex.

It localises to the cytoplasm. The catalysed reaction is RNA(n) + a ribonucleoside 5'-triphosphate = RNA(n+1) + diphosphate. Its function is as follows. DNA-dependent RNA polymerase (RNAP) catalyzes the transcription of DNA into RNA using the four ribonucleoside triphosphates as substrates. The polypeptide is DNA-directed RNA polymerase subunit Rpo11 (Pyrococcus furiosus (strain ATCC 43587 / DSM 3638 / JCM 8422 / Vc1)).